A 190-amino-acid polypeptide reads, in one-letter code: dCTP deaminase, dUMP-forming (190 aa).

DCTP is bound by residues 101-106 (KSSLGR), D119, 127-129 (TLE), Q148, Y162, and Q174. E129 serves as the catalytic Proton donor/acceptor. The tract at residues 163–190 (GSSQVGSKYQGQRGPTPSKSYQNFVKSN) is disordered.

The protein belongs to the dCTP deaminase family. In terms of assembly, homotrimer.

The enzyme catalyses dCTP + 2 H2O = dUMP + NH4(+) + diphosphate. The protein operates within pyrimidine metabolism; dUMP biosynthesis; dUMP from dCTP: step 1/1. Its function is as follows. Bifunctional enzyme that catalyzes both the deamination of dCTP to dUTP and the hydrolysis of dUTP to dUMP without releasing the toxic dUTP intermediate. In Mycolicibacterium gilvum (strain PYR-GCK) (Mycobacterium gilvum (strain PYR-GCK)), this protein is dCTP deaminase, dUMP-forming.